Reading from the N-terminus, the 436-residue chain is MTLPTVAIVGRPNVGKSTLFNRIAGERISIVEDVEGVTRDRIYTSAEWLNRQFSLIDTGGIDDVDAPFMEQIKHQAGIAMTEADVIVFVVSGKEGVTDADEYVARILYKTNKPVILAVNKVDNPEMRADIYDFYSLGLGDPYPVSSVHGIGTGDVLDAIVENLPTEVEEENPDIIRFSLIGRPNVGKSSLINAILGEDRVIASPIAGTTRDAIDTNFVDSEGQEYTMIDTAGMRKSGKVYENTEKYSVMRSMRAIDRSDVVLMVINAEEGIREYDKRIAGFAHEAGKGIIIVVNKWDTIKKDNHTVANWEADIRDQFQFLSYAPIVFVSAKTKQRLNKLPEMIKRISESQNRRISSAVLNDVIMDAIAINPTPTDKGKRLKIFYGTQVSVKPPTFVIFVNEEELMHFSYMRFLENQIRQAFGFEGTPIHLIARKRK.

EngA-type G domains follow at residues 4-167 and 175-351; these read PTVA…PTEV and IRFS…ESQN. Residues 10 to 17, 57 to 61, 119 to 122, 181 to 188, 229 to 233, and 294 to 297 contribute to the GTP site; these read GRPNVGKS, DTGGI, NKVD, DTAGM, and NKWD. One can recognise a KH-like domain in the interval 352-436; the sequence is RRISSAVLND…PIHLIARKRK (85 aa).

It belongs to the TRAFAC class TrmE-Era-EngA-EngB-Septin-like GTPase superfamily. EngA (Der) GTPase family. Associates with the 50S ribosomal subunit.

Its function is as follows. GTPase that plays an essential role in the late steps of ribosome biogenesis. The protein is GTPase Der of Streptococcus thermophilus (strain ATCC BAA-491 / LMD-9).